A 1314-amino-acid polypeptide reads, in one-letter code: AT-rich interactive domain-containing protein 4B (1314 aa).

Disordered stretches follow at residues 123-169 (LPLT…RKQT) and 266-306 (KTEL…EPFP). 3 positions are modified to phosphoserine: serine 276, serine 295, and serine 296. Positions 277 to 305 (EAEEEEEEEDDEKEKEDNSSEEEEEIEPF) are enriched in acidic residues. Positions 306-398 (PEERENFLQQ…YLYGFEEYCR (93 aa)) constitute an ARID domain. Glycyl lysine isopeptide (Lys-Gly) (interchain with G-Cter in SUMO2) cross-links involve residues lysine 428 and lysine 461. The span at 439-464 (NVEDSKNVMPKEETPAEDESERKENI) shows a compositional bias: basic and acidic residues. Disordered regions lie at residues 439-577 (NVED…KVQV), 635-678 (IKHR…SPEM), 709-888 (ASES…EEKR), 943-1215 (KELF…RLPK), and 1256-1290 (VASI…SITA). A Phosphoserine modification is found at serine 482. The span at 486–511 (KEAHITKLEENENLEDKDGGRARTEE) shows a compositional bias: basic and acidic residues. Positions 531–567 (NKEEDEDDEEIEEEEEEDEEEDEDEDDDDNNEEEEFE) are enriched in acidic residues. Positions 572–624 (GMKVQVRYGRGKNQKMYEASIKDSDVEGGEALYLVHYCGWNVRYDEWIKADKI) constitute a Tudor-knot domain. Basic and acidic residues predominate over residues 643 to 656 (NKLDKEKDRDEKYS). 4 positions are modified to phosphoserine: serine 666, serine 668, serine 675, and serine 717. Basic and acidic residues-rich tracts occupy residues 722-754 (ERCT…KEEQ) and 778-787 (SPERLRKDME). Lysine 751 participates in a covalent cross-link: Glycyl lysine isopeptide (Lys-Gly) (interchain with G-Cter in SUMO2). Phosphoserine is present on residues serine 778 and serine 790. The segment covering 788–800 (AISEDTDFEEEDE) has biased composition (acidic residues). Residue threonine 793 is modified to Phosphothreonine. Basic and acidic residues-rich tracts occupy residues 808-817 (VKKDTTDKAL), 841-853 (GKKE…KEPL), and 997-1012 (KPIE…RKTE). Residues 1013–1023 (FPSSGSNSVLN) show a composition bias toward polar residues. Phosphoserine is present on serine 1016. Threonine 1028 carries the phosphothreonine modification. Residues 1030–1051 (ESPSSVTITEASQQQSSVTVSV) show a composition bias toward low complexity. Serine 1031 carries the post-translational modification Phosphoserine. Residues 1058 to 1067 (EEVRSIKSET) show a composition bias toward basic and acidic residues. Positions 1089-1103 (SSPAGFDASVSSSSS) are enriched in low complexity. Basic residues predominate over residues 1132 to 1150 (KKQKRSHKATVVNNKKKGK). Threonine 1152 carries the post-translational modification Phosphothreonine. Phosphoserine occurs at positions 1154, 1155, 1157, and 1161. The segment covering 1164–1186 (ESVTKTQTIKSVPTGMKTHNSKS) has biased composition (polar residues). The span at 1198–1210 (RNGDKDPDLKEPS) shows a compositional bias: basic and acidic residues. A coiled-coil region spans residues 1227–1272 (ENMTSAERISILQEKLQEIRKHYLSLKSEVASIDRRRKRLKKKERE). A compositionally biased stretch (low complexity) spans 1274-1290 (AATSSSSSSPSSSSITA).

In terms of assembly, component of a Sin3A corepressor complex consisting of SIN3A, SAP130, SUDS3/SAP45, SAP180, HDAC1 and HDAC2. Interacts with ARID4A. Interacts with AR. Expressed in Sertoli cells of the testis.

The protein resides in the nucleus. Acts as a transcriptional repressor. May function in the assembly and/or enzymatic activity of the Sin3A corepressor complex or in mediating interactions between the complex and other regulatory complexes. Plays a role in the regulation of epigenetic modifications at the PWS/AS imprinting center near the SNRPN promoter, where it might function as part of a complex with RB1 and ARID4A. Involved in spermatogenesis, together with ARID4A, where it functions as a transcriptional coactivator for AR (androgen receptor) and enhances expression of genes required for sperm maturation. Regulates expression of the tight junction protein CLDN3 in the testis, which is important for integrity of the blood-testis barrier. Plays a role in myeloid homeostasis where it regulates the histone methylation state of bone marrow cells and expression of various genes involved in hematopoiesis. May function as a leukemia suppressor. The polypeptide is AT-rich interactive domain-containing protein 4B (Arid4b) (Mus musculus (Mouse)).